A 348-amino-acid chain; its full sequence is Casein kinase II subunit alpha (348 aa).

A Protein kinase domain is found at 55–340 (YEIVRKIGRG…PLEAMEHPFF (286 aa)). ATP-binding positions include 61-69 (IGRGKFSEV) and Lys-84. Asp-172 (proton acceptor) is an active-site residue.

The protein belongs to the protein kinase superfamily. Ser/Thr protein kinase family. CK2 subfamily. Tetramer of two alpha and two beta chains.

It is found in the cytoplasm. It carries out the reaction L-seryl-[protein] + ATP = O-phospho-L-seryl-[protein] + ADP + H(+). The catalysed reaction is L-threonyl-[protein] + ATP = O-phospho-L-threonyl-[protein] + ADP + H(+). Functionally, casein kinases are operationally defined by their preferential utilization of acidic proteins such as caseins as substrates. The alpha chain contains the catalytic site. This Theileria annulata protein is Casein kinase II subunit alpha.